Here is a 225-residue protein sequence, read N- to C-terminus: Translation initiation factor 6 (225 aa).

It belongs to the eIF-6 family.

Its function is as follows. Binds to the 50S ribosomal subunit and prevents its association with the 30S ribosomal subunit to form the 70S initiation complex. The protein is Translation initiation factor 6 of Hyperthermus butylicus (strain DSM 5456 / JCM 9403 / PLM1-5).